Consider the following 602-residue polypeptide: MRNKICEELNKSDIGKEVNLCGWVDRRRDHGGVIFIDLRDHSGFMQITINPEDGETLFKQAEILRNETVIMVNGIVNERPKDSINKNIITGELELKVQDLQILNQIKNNLPFPVSVHDYENTKEELRLKYRYLDIRRGKLLENLKTRHKIIKAIRNYLDNSGFTEVETPLLTKSTPEGARDFLVPARLSNGDFFALPQSPQLFKQLLMVGGLDKYYQIAKCFRDEDLRADRQPEFTQLDIEMSFVSEEEIIAFNEKLIKHIWKNVLNINLNEDFPRMSWQEAMDNYGTDRPDTRYGMLLKNLGEILGNIGFNIFTKAIQMGGAIKSITIKNGNSSISNVRIKPGGDIFKVAQEAGAGGLAFIRVKGDELETIGAIKNNLNKDHISNILKITEAEDGDLILLGAGSTKIVNQSLDRVRQYIAKDLNLLENQKAQSQWNFLWITDFPMFEMNEEEKRFEALHHPFCSPKNVKFEDKKELTKKIETSTAYAYDLVLNGLELGGGSLRIHQAEMQKEVLRTVGLTDHQIDEKFGFLIEALEMGAPPHGGIAFGLDRITMLILGVDSIRETIAFPKNQQAKCLLTNAPSNVSKSQLKELDIEITIDE.

An L-aspartate-binding site is contributed by Glu-177. Residues Gln-201–Lys-204 are aspartate. Position 223 (Arg-223) interacts with L-aspartate. ATP is bound by residues Arg-223–Glu-225 and Gln-232. Residue His-460 coordinates L-aspartate. Glu-497 contacts ATP. An L-aspartate-binding site is contributed by Arg-504. Position 549 to 552 (Gly-549 to Arg-552) interacts with ATP.

Belongs to the class-II aminoacyl-tRNA synthetase family. Type 1 subfamily. In terms of assembly, homodimer.

The protein resides in the cytoplasm. It carries out the reaction tRNA(Asx) + L-aspartate + ATP = L-aspartyl-tRNA(Asx) + AMP + diphosphate. Aspartyl-tRNA synthetase with relaxed tRNA specificity since it is able to aspartylate not only its cognate tRNA(Asp) but also tRNA(Asn). Reaction proceeds in two steps: L-aspartate is first activated by ATP to form Asp-AMP and then transferred to the acceptor end of tRNA(Asp/Asn). In Prochlorococcus marinus (strain MIT 9515), this protein is Aspartate--tRNA(Asp/Asn) ligase.